Here is a 207-residue protein sequence, read N- to C-terminus: Thymidylate kinase (207 aa).

7–14 contributes to the ATP binding site; sequence GCEGTGKT.

This sequence belongs to the thymidylate kinase family.

It carries out the reaction dTMP + ATP = dTDP + ADP. Phosphorylation of dTMP to form dTDP in both de novo and salvage pathways of dTTP synthesis. This Onion yellows phytoplasma (strain OY-M) protein is Thymidylate kinase.